We begin with the raw amino-acid sequence, 319 residues long: Acetyl esterase (319 aa).

An Involved in the stabilization of the negatively charged intermediate by the formation of the oxyanion hole motif is present at residues 91 to 93; that stretch reads HGG. Active-site residues include serine 165, aspartate 262, and histidine 292.

This sequence belongs to the 'GDXG' lipolytic enzyme family. Homodimer. Interacts with MalT and MelA.

It localises to the cytoplasm. Displays esterase activity towards short chain fatty esters (acyl chain length of up to 8 carbons). Able to hydrolyze triacetylglycerol (triacetin) and tributyrylglycerol (tributyrin), but not trioleylglycerol (triolein) or cholesterol oleate. Negatively regulates MalT activity by antagonizing maltotriose binding. Inhibits MelA galactosidase activity. The protein is Acetyl esterase of Escherichia coli O45:K1 (strain S88 / ExPEC).